The sequence spans 460 residues: Anthocyanidin 3-O-glucoside 5-O-glucosyltransferase 1 (460 aa).

Positions 1 to 22 (MVRRRVLLATFPAQGHINPALQ) are cleaved as a signal peptide. The active-site Proton acceptor is His-16. His-16 provides a ligand contact to an anthocyanidin. Gln-338, His-353, Trp-356, Asn-357, Ser-358, Glu-361, Asp-377, and Gln-378 together coordinate UDP-alpha-D-glucose.

Belongs to the UDP-glycosyltransferase family.

It carries out the reaction an anthocyanidin 3-O-beta-D-glucoside + UDP-alpha-D-glucose = an anthocyanidin 3,5-di-O-beta-D-glucoside + UDP + 2 H(+). It functions in the pathway pigment biosynthesis; anthocyanin biosynthesis. Functionally, catalyzes the glucosylation at the O-5 position of anthocyanidin 3-glucosides to form anthocyanidin 3,5-di-O-glucosides using UDP-glucose as sugar donor. Anthocyanidin 3,5-di-O-glucosides are molecules that are responsible for pigmentation. Also acts on anthocyanidin 3-O-(6-O-malonylglucoside). Much less active with hydroxycinnamoylglucose derivatives. No activity in the absence of the 3-O-glucoside group. The protein is Anthocyanidin 3-O-glucoside 5-O-glucosyltransferase 1 (PF3R4) of Perilla frutescens (Beefsteak mint).